Consider the following 438-residue polypeptide: GTPase Der (438 aa).

EngA-type G domains are found at residues 4–168 (PIVA…PEGN) and 177–352 (IRIA…GNYC). Residues 10–17 (GRPNVGKS), 57–61 (DTGGI), 120–123 (NKID), 183–190 (GRPNVGKS), 230–234 (DTAGL), and 295–298 (NKWD) each bind GTP. Residues 353 to 437 (KRIKTGILND…GIKLEFRERK (85 aa)) enclose the KH-like domain.

It belongs to the TRAFAC class TrmE-Era-EngA-EngB-Septin-like GTPase superfamily. EngA (Der) GTPase family. As to quaternary structure, associates with the 50S ribosomal subunit.

GTPase that plays an essential role in the late steps of ribosome biogenesis. The protein is GTPase Der of Clostridium novyi (strain NT).